The primary structure comprises 157 residues: Large ribosomal subunit protein uL13m (157 aa).

The N-terminal 29 residues, 1 to 29 (MSTLNGQTALAYAKVWHHVSAKNVPLGRL), are a transit peptide targeting the mitochondrion.

This sequence belongs to the universal ribosomal protein uL13 family. As to quaternary structure, component of the mitochondrial large ribosomal subunit (mt-LSU). Mature yeast 74S mitochondrial ribosomes consist of a small (37S) and a large (54S) subunit. The 37S small subunit contains a 15S ribosomal RNA (15S mt-rRNA) and at least 32 different proteins. The 54S large subunit contains a 21S rRNA (21S mt-rRNA) and at least 45 different proteins.

It is found in the mitochondrion. Its function is as follows. Component of the mitochondrial ribosome (mitoribosome), a dedicated translation machinery responsible for the synthesis of mitochondrial genome-encoded proteins, including at least some of the essential transmembrane subunits of the mitochondrial respiratory chain. The mitoribosomes are attached to the mitochondrial inner membrane and translation products are cotranslationally integrated into the membrane. The chain is Large ribosomal subunit protein uL13m from Schizosaccharomyces pombe (strain 972 / ATCC 24843) (Fission yeast).